The sequence spans 98 residues: Minor capsid protein P13 (98 aa).

Residues 3-23 are hydrophobic; that stretch reads KITPFLIAAVVAVIVLAVWLF.

As to quaternary structure, interacts with the major capsid protein.

It is found in the virion. Functionally, one of the minor capsid proteins that constitute a network internal to the major capsid proteins and outside the lipid membrane. The minor capsid protein P13 does not serve a cross-linking function between neighboring capsomers, it may play a role in the viral capsid assembly. In Chlorella (PBCV-1), this protein is Minor capsid protein P13.